The following is a 295-amino-acid chain: Large ribosomal subunit protein uL15m (295 aa).

A mitochondrion-targeting transit peptide spans 1–20 (MAGTARGCGTSLDLLRSLPR). The interval 21 to 67 (VSLANLKPSPNSRKRERRPRDRRRGRKCGRGHKGERQRGTRPRLGFE) is disordered. Basic residues predominate over residues 32–51 (SRKRERRPRDRRRGRKCGRG).

This sequence belongs to the universal ribosomal protein uL15 family. As to quaternary structure, component of the mitochondrial ribosome large subunit (39S) which comprises a 16S rRNA and about 50 distinct proteins.

The protein resides in the mitochondrion. The chain is Large ribosomal subunit protein uL15m (Mrpl15) from Mus musculus (Mouse).